A 520-amino-acid polypeptide reads, in one-letter code: Cobalt-zinc-cadmium resistance protein CzcB (520 aa).

A helical membrane pass occupies residues 9–29 (AAIAAIVLVGGVATGGVLLSG). A disordered region spans residues 28–85 (SGRSAPEEQGGHSESKGHGDTEHHGKQAAEADHKDDKSHGDGEHHEVKKGPNGGALFS). The span at 32–76 (APEEQGGHSESKGHGDTEHHGKQAAEADHKDDKSHGDGEHHEVKK) shows a compositional bias: basic and acidic residues. Positions 286 to 320 (EQKISAEQDYLSARNALQEAQISVQNAQQKLTAIG) form a coiled coil.

Belongs to the membrane fusion protein (MFP) (TC 8.A.1) family.

Its subcellular location is the cell inner membrane. Functionally, czcA and CzcB together would act in zinc efflux nearly as effectively as the complete czc efflux system (CzcABC). The CzcB protein is thought to funnel zinc cations to the CzcA transport protein. The chain is Cobalt-zinc-cadmium resistance protein CzcB (czcB) from Cupriavidus metallidurans (strain ATCC 43123 / DSM 2839 / NBRC 102507 / CH34) (Ralstonia metallidurans).